A 366-amino-acid polypeptide reads, in one-letter code: GTP cyclohydrolase 1 type 2 homolog (366 aa).

Positions 64, 65, 102, 326, and 329 each coordinate a divalent metal cation.

This sequence belongs to the GTP cyclohydrolase I type 2/NIF3 family. As to quaternary structure, homohexamer.

This is GTP cyclohydrolase 1 type 2 homolog from Staphylococcus epidermidis (strain ATCC 35984 / DSM 28319 / BCRC 17069 / CCUG 31568 / BM 3577 / RP62A).